The following is a 113-amino-acid chain: Hydrogenase maturation factor HypA (113 aa).

Histidine 2 provides a ligand contact to Ni(2+). The Zn(2+) site is built by cysteine 73, cysteine 76, cysteine 89, and cysteine 92.

It belongs to the HypA/HybF family.

In terms of biological role, involved in the maturation of [NiFe] hydrogenases. Required for nickel insertion into the metal center of the hydrogenase. This chain is Hydrogenase maturation factor HypA, found in Cereibacter sphaeroides (strain KD131 / KCTC 12085) (Rhodobacter sphaeroides).